A 99-amino-acid polypeptide reads, in one-letter code: Large ribosomal subunit protein eL30 (99 aa).

Belongs to the eukaryotic ribosomal protein eL30 family. As to quaternary structure, part of the 50S ribosomal subunit.

The protein is Large ribosomal subunit protein eL30 of Pyrococcus furiosus (strain ATCC 43587 / DSM 3638 / JCM 8422 / Vc1).